A 612-amino-acid chain; its full sequence is Sulfite reductase [NADPH] flavoprotein alpha-component (612 aa).

The 139-residue stretch at Val64–Val202 folds into the Flavodoxin-like domain. FMN contacts are provided by residues Ser70 to Ala75, Ser117 to Gly120, and Leu153 to Cys162. The 215-residue stretch at Thr247–Pro461 folds into the FAD-binding FR-type domain. FAD contacts are provided by residues Thr335, Lys369, Arg399–Ser402, Thr417–Gly419, Tyr423, and Gly432–Ser435. NADP(+)-binding positions include Ser532–Arg533, Lys538–Gln542, and Asp574. Tyr612 is an FAD binding site.

The protein belongs to the NADPH-dependent sulphite reductase flavoprotein subunit CysJ family. It in the N-terminal section; belongs to the flavodoxin family. In the C-terminal section; belongs to the flavoprotein pyridine nucleotide cytochrome reductase family. As to quaternary structure, alpha(8)-beta(8). The alpha component is a flavoprotein, the beta component is a hemoprotein. Requires FAD as cofactor. FMN is required as a cofactor.

It carries out the reaction hydrogen sulfide + 3 NADP(+) + 3 H2O = sulfite + 3 NADPH + 4 H(+). It functions in the pathway sulfur metabolism; hydrogen sulfide biosynthesis; hydrogen sulfide from sulfite (NADPH route): step 1/1. In terms of biological role, component of the sulfite reductase complex that catalyzes the 6-electron reduction of sulfite to sulfide. This is one of several activities required for the biosynthesis of L-cysteine from sulfate. The flavoprotein component catalyzes the electron flow from NADPH -&gt; FAD -&gt; FMN to the hemoprotein component. In Yersinia pseudotuberculosis serotype O:1b (strain IP 31758), this protein is Sulfite reductase [NADPH] flavoprotein alpha-component.